The chain runs to 224 residues: MKKSLQIALDGPAGAGKSTIAKSLAKQLGYVYIDTGAIYRAVTYRALNEGIALEDGPALAQMIENMSLRLVPSEEGQRVFDGEEEVTSVIRSSEVTNNVSFVARQPEVRDALMDLQRDLAKKGGVVMDGRDIGTHVLPNADLKVFMTASVEERARRRHEENVSKGIPSDYEQLIEEIALRDKRDSEREVAPLRQAEDAHFLDTTTLSIDGVVQAIERLIEEVKA.

11-19 contributes to the ATP binding site; sequence GPAGAGKST.

Belongs to the cytidylate kinase family. Type 1 subfamily.

It is found in the cytoplasm. The enzyme catalyses CMP + ATP = CDP + ADP. The catalysed reaction is dCMP + ATP = dCDP + ADP. This Exiguobacterium sp. (strain ATCC BAA-1283 / AT1b) protein is Cytidylate kinase.